A 163-amino-acid chain; its full sequence is uncharacterized protein (163 aa).

This is an uncharacterized protein from Rickettsia conorii (strain ATCC VR-613 / Malish 7).